A 178-amino-acid polypeptide reads, in one-letter code: Probable DNA-directed RNA polymerase subunit delta (178 aa).

In terms of domain architecture, HTH HARE-type spans 14-81; that stretch reads LSLIDVAHFI…GNNTWGLRAW (68 aa). Disordered regions lie at residues 88-122 and 141-178; these read DEEV…DYDD and LDED…PEDK. Acidic residues-rich tracts occupy residues 105–122, 141–150, and 161–178; these read DDED…DYDD, LDEDEDDDDH, and TVED…PEDK.

This sequence belongs to the RpoE family. RNAP is composed of a core of 2 alpha, a beta and a beta' subunits. The core is associated with a delta subunit and one of several sigma factors.

Participates in both the initiation and recycling phases of transcription. In the presence of the delta subunit, RNAP displays an increased specificity of transcription, a decreased affinity for nucleic acids, and an increased efficiency of RNA synthesis because of enhanced recycling. This Listeria monocytogenes serovar 1/2a (strain ATCC BAA-679 / EGD-e) protein is Probable DNA-directed RNA polymerase subunit delta.